We begin with the raw amino-acid sequence, 214 residues long: Glutathione S-transferase 1 (214 aa).

Residues 2–83 form the GST N-terminal domain; that stretch reads APMKLYGAVM…YAARKNKPEL (82 aa). Glutathione-binding positions include Ser-12, 41-42, 54-55, and 67-68; these read HK, QV, and ES. The GST C-terminal domain occupies 88-214; that stretch reads NLEEAAMVDV…KVAALMKPSA (127 aa).

It belongs to the GST superfamily. Phi family. As to quaternary structure, homodimer or heterodimer of GST-I and GST-IV (=GST-II). In terms of tissue distribution, expressed in the stem and leaves, lower levels are seen in the pollen and endosperm.

The enzyme catalyses RX + glutathione = an S-substituted glutathione + a halide anion + H(+). Functionally, conjugation of reduced glutathione to a wide number of exogenous and endogenous hydrophobic electrophiles. Involved in the detoxification of certain herbicides. The protein is Glutathione S-transferase 1 (GST1) of Zea mays (Maize).